Reading from the N-terminus, the 391-residue chain is ATP phosphoribosyltransferase regulatory subunit (391 aa).

The protein belongs to the class-II aminoacyl-tRNA synthetase family. HisZ subfamily. In terms of assembly, heteromultimer composed of HisG and HisZ subunits.

It is found in the cytoplasm. It functions in the pathway amino-acid biosynthesis; L-histidine biosynthesis; L-histidine from 5-phospho-alpha-D-ribose 1-diphosphate: step 1/9. In terms of biological role, required for the first step of histidine biosynthesis. May allow the feedback regulation of ATP phosphoribosyltransferase activity by histidine. This is ATP phosphoribosyltransferase regulatory subunit from Bacillus licheniformis (strain ATCC 14580 / DSM 13 / JCM 2505 / CCUG 7422 / NBRC 12200 / NCIMB 9375 / NCTC 10341 / NRRL NRS-1264 / Gibson 46).